The sequence spans 793 residues: Phenylalanine--tRNA ligase beta subunit (793 aa).

The tRNA-binding domain maps to 39 to 148 (AAPFKGVKAA…EGDFPGVDLH (110 aa)). The B5 domain maps to 401–476 (PPQATIILRK…RLYGYDRLPS (76 aa)). D454, D460, E463, and E464 together coordinate Mg(2+). Residues 699-792 (SKFPAIRRDI…LVTELGAIIR (94 aa)) enclose the FDX-ACB domain.

It belongs to the phenylalanyl-tRNA synthetase beta subunit family. Type 1 subfamily. In terms of assembly, tetramer of two alpha and two beta subunits. Mg(2+) serves as cofactor.

The protein localises to the cytoplasm. It carries out the reaction tRNA(Phe) + L-phenylalanine + ATP = L-phenylalanyl-tRNA(Phe) + AMP + diphosphate + H(+). The sequence is that of Phenylalanine--tRNA ligase beta subunit from Nitrosococcus oceani (strain ATCC 19707 / BCRC 17464 / JCM 30415 / NCIMB 11848 / C-107).